Here is a 545-residue protein sequence, read N- to C-terminus: Squalene monooxygenase SE2 (545 aa).

A helical membrane pass occupies residues 12–32; the sequence is EYFLMFAATLLFGFVLYLFTL. Residues 86–87, 106–107, Arg-114, Arg-185, Val-201, Asp-364, and Met-377 each bind FAD; these read VA and ER. 2 helical membrane passes run 475–495 and 500–520; these read LFFHFFAVAIYGVGRLLIPFP and MWLGARLISGASGIIFPIIKS.

This sequence belongs to the squalene monooxygenase family. FAD serves as cofactor. Weak expression in petioles and flower buds and barely detectable in roots and leaves. In petioles, preferentially observed in vascular bundle tissue (phloem cells and parenchymatous cells near xylem) and resin ducts.

Its subcellular location is the membrane. The enzyme catalyses squalene + reduced [NADPH--hemoprotein reductase] + O2 = (S)-2,3-epoxysqualene + oxidized [NADPH--hemoprotein reductase] + H2O + H(+). Its pathway is terpene metabolism; lanosterol biosynthesis; lanosterol from farnesyl diphosphate: step 2/3. Component of the triterpene saponins (e.g. ginsenosides or panaxosides) and phytosterols biosynthetic pathways. Catalyzes the first oxygenation step in sterol biosynthesis and is suggested to be one of the rate-limiting enzymes in this pathway. In Panax ginseng (Korean ginseng), this protein is Squalene monooxygenase SE2.